Consider the following 560-residue polypeptide: MSNKVKSDIEIASKAEILPVTTIAKHLGLDADALELYGKYKAKLSYDTIHSLKDQEPGKLVLVTAINPTPAGEGKSTVTVGLGDALSKKDKKTVIALREPSLGPTMGIKGGATGGGYAQVIPMEDINLHFTGDFHAITAANNALSAFIDNHMQQGNELGIDGRRIVWKRVVDLNDRALRKVVVGLGGPVQGVPREDGFDITVASEIMAIICLASDLKDLKKRLSEIVIGYNYKKEPITVGEMGYEGALTLLLKDALKPNLVQTLEHTPAIVHGGPFANIAHGCNSVSATSTALRLGDYVVTEAGFGADLGAEKFLDIKVPALGKAPDCVVIVATIRALKMHGGALKTELSEENVEALAKGFTNLQKHTESIQTFGIPYVVAINKFITDSDAEVAKLEALCEEHGIPFSLTEVWEKGGDGGLELADKVIAAVESGEADYNRIYDDAWSMEEKLEAIVTKVYGGIGVELSSKAQKQIVEFKKYGWDRYPICMAKTQYSLSDDPTLLGRPTDFVIHIREFIPKLGAGFVVALTGDVMTMPGLPKKPAALNMDVDENGNAQGLF.

69–76 (TPAGEGKS) is an ATP binding site.

It belongs to the formate--tetrahydrofolate ligase family.

It catalyses the reaction (6S)-5,6,7,8-tetrahydrofolate + formate + ATP = (6R)-10-formyltetrahydrofolate + ADP + phosphate. Its pathway is one-carbon metabolism; tetrahydrofolate interconversion. This chain is Formate--tetrahydrofolate ligase, found in Listeria welshimeri serovar 6b (strain ATCC 35897 / DSM 20650 / CCUG 15529 / CIP 8149 / NCTC 11857 / SLCC 5334 / V8).